Consider the following 75-residue polypeptide: uncharacterized protein (75 aa).

A helical membrane pass occupies residues 12 to 32 (LKVFILFTGFTALFYYAMIWV).

It is found in the cell membrane. This is an uncharacterized protein from Bacillus subtilis (strain 168).